Reading from the N-terminus, the 489-residue chain is UDP-N-acetylmuramoyl-L-alanyl-D-glutamate--2,6-diaminopimelate ligase (489 aa).

Serine 34 is a binding site for UDP-N-acetyl-alpha-D-muramoyl-L-alanyl-D-glutamate. 110–116 (GTAGKTS) contributes to the ATP binding site. UDP-N-acetyl-alpha-D-muramoyl-L-alanyl-D-glutamate-binding positions include 152–153 (TT), serine 179, glutamine 185, and arginine 187. Position 219 is an N6-carboxylysine (lysine 219). Residues arginine 383, 407 to 410 (DNPR), glycine 455, and glutamate 459 contribute to the meso-2,6-diaminopimelate site. A Meso-diaminopimelate recognition motif motif is present at residues 407-410 (DNPR).

Belongs to the MurCDEF family. MurE subfamily. Requires Mg(2+) as cofactor. In terms of processing, carboxylation is probably crucial for Mg(2+) binding and, consequently, for the gamma-phosphate positioning of ATP.

It localises to the cytoplasm. It carries out the reaction UDP-N-acetyl-alpha-D-muramoyl-L-alanyl-D-glutamate + meso-2,6-diaminopimelate + ATP = UDP-N-acetyl-alpha-D-muramoyl-L-alanyl-gamma-D-glutamyl-meso-2,6-diaminopimelate + ADP + phosphate + H(+). It functions in the pathway cell wall biogenesis; peptidoglycan biosynthesis. In terms of biological role, catalyzes the addition of meso-diaminopimelic acid to the nucleotide precursor UDP-N-acetylmuramoyl-L-alanyl-D-glutamate (UMAG) in the biosynthesis of bacterial cell-wall peptidoglycan. In Agrobacterium fabrum (strain C58 / ATCC 33970) (Agrobacterium tumefaciens (strain C58)), this protein is UDP-N-acetylmuramoyl-L-alanyl-D-glutamate--2,6-diaminopimelate ligase.